A 177-amino-acid chain; its full sequence is Translationally-controlled tumor protein homolog (177 aa).

A TCTP domain is found at 1-177; the sequence is MIIYRDLFSG…IKQGLVVEKC (177 aa).

Belongs to the TCTP family.

Its subcellular location is the cytoplasm. In terms of biological role, involved in calcium binding and microtubule stabilization. The chain is Translationally-controlled tumor protein homolog from Trichinella pseudospiralis (Parasitic roundworm).